A 222-amino-acid chain; its full sequence is Peptidyl-prolyl cis-trans isomerase FKBP7 (222 aa).

A signal peptide spans Met1–Ala23. Residue Asn45 is glycosylated (N-linked (GlcNAc...) asparagine). A PPIase FKBP-type domain is found at Gly53–Thr145. EF-hand domains follow at residues Thr145–Lys180 and Tyr189–Leu222. Residues Asp158, Asp160, Asp162, Gln164, Glu169, Asp202, Asp204, Asp206, and Glu213 each coordinate Ca(2+). Positions His219–Leu222 match the Prevents secretion from ER motif.

In terms of processing, glycosylated.

It is found in the endoplasmic reticulum lumen. It carries out the reaction [protein]-peptidylproline (omega=180) = [protein]-peptidylproline (omega=0). In terms of biological role, PPIases accelerate the folding of proteins during protein synthesis. This is Peptidyl-prolyl cis-trans isomerase FKBP7 (FKBP7) from Pongo abelii (Sumatran orangutan).